A 258-amino-acid chain; its full sequence is Type III pantothenate kinase (258 aa).

6-13 (DVGNSDTV) contacts ATP. Substrate is bound at residue 108–111 (GSDR). D110 (proton acceptor) is an active-site residue. Position 130 (D130) interacts with K(+). Residue T133 participates in ATP binding. Residue T185 participates in substrate binding.

It belongs to the type III pantothenate kinase family. As to quaternary structure, homodimer. Requires NH4(+) as cofactor. K(+) serves as cofactor.

The protein resides in the cytoplasm. It carries out the reaction (R)-pantothenate + ATP = (R)-4'-phosphopantothenate + ADP + H(+). It participates in cofactor biosynthesis; coenzyme A biosynthesis; CoA from (R)-pantothenate: step 1/5. Functionally, catalyzes the phosphorylation of pantothenate (Pan), the first step in CoA biosynthesis. The sequence is that of Type III pantothenate kinase from Thermobifida fusca (strain YX).